Here is a 293-residue protein sequence, read N- to C-terminus: MKKINKLAIVGGTHGNEFTGIYLVKKFEEFPELISRRNFDTQTLLANPQGFELVKRYIDTDLNRCFKVEDLENNTSLNYEESRAKFINQMLGPKGNPKFDFILDLHTTTANMGLTIILVNYHPFNLKIATYLSSVEPNLKIYTCFNPEVENTFINSICERGFAIEVGPIAQGILQADLFYKTEKLVQISLDFIEHFNEGKLDHINRDIVIYKHLKVVDYPKTKDGEIVAMIHPQLQGRDYQKLSPGEPMFLTFDNQTIYYQEESPVWPVFINEAAYYEKGIAMCLTKKESIRV.

Zn(2+) is bound by residues His14 and Glu17. Residues Arg56 and 63-64 (NR) each bind substrate. His106 lines the Zn(2+) pocket. Positions 165 and 276 each coordinate substrate.

This sequence belongs to the AspA/AstE family. Aspartoacylase subfamily. The cofactor is Zn(2+).

It catalyses the reaction an N-acyl-L-aspartate + H2O = a carboxylate + L-aspartate. The protein is Probable aspartoacylase of Trichodesmium erythraeum (strain IMS101).